Consider the following 250-residue polypeptide: 3-deoxy-manno-octulosonate cytidylyltransferase (250 aa).

The protein belongs to the KdsB family.

Its subcellular location is the cytoplasm. The enzyme catalyses 3-deoxy-alpha-D-manno-oct-2-ulosonate + CTP = CMP-3-deoxy-beta-D-manno-octulosonate + diphosphate. It functions in the pathway nucleotide-sugar biosynthesis; CMP-3-deoxy-D-manno-octulosonate biosynthesis; CMP-3-deoxy-D-manno-octulosonate from 3-deoxy-D-manno-octulosonate and CTP: step 1/1. Its pathway is bacterial outer membrane biogenesis; lipopolysaccharide biosynthesis. Functionally, activates KDO (a required 8-carbon sugar) for incorporation into bacterial lipopolysaccharide in Gram-negative bacteria. The protein is 3-deoxy-manno-octulosonate cytidylyltransferase of Francisella tularensis subsp. holarctica (strain LVS).